A 203-amino-acid polypeptide reads, in one-letter code: DNA-directed RNA polymerase subunit gamma (203 aa).

The Zn(2+) site is built by C34, C36, C49, and C52.

Belongs to the RNA polymerase beta' chain family. RpoC1 subfamily. As to quaternary structure, in cyanobacteria the RNAP catalytic core is composed of 2 alpha, 1 beta, 1 beta', 1 gamma and 1 omega subunit. When a sigma factor is associated with the core the holoenzyme is formed, which can initiate transcription. The cofactor is Zn(2+).

It catalyses the reaction RNA(n) + a ribonucleoside 5'-triphosphate = RNA(n+1) + diphosphate. DNA-dependent RNA polymerase catalyzes the transcription of DNA into RNA using the four ribonucleoside triphosphates as substrates. The polypeptide is DNA-directed RNA polymerase subunit gamma (rpoC1) (Prochlorothrix hollandica).